Reading from the N-terminus, the 229-residue chain is Large ribosomal subunit protein uL1 (229 aa).

It belongs to the universal ribosomal protein uL1 family. Part of the 50S ribosomal subunit.

Its function is as follows. Binds directly to 23S rRNA. The L1 stalk is quite mobile in the ribosome, and is involved in E site tRNA release. In terms of biological role, protein L1 is also a translational repressor protein, it controls the translation of the L11 operon by binding to its mRNA. The polypeptide is Large ribosomal subunit protein uL1 (Clostridium botulinum (strain Alaska E43 / Type E3)).